We begin with the raw amino-acid sequence, 307 residues long: Glycerol-3-phosphate dehydrogenase [NAD(P)+] (307 aa).

Phe11, Arg31, and Lys95 together coordinate NADPH. Positions 95, 121, and 123 each coordinate sn-glycerol 3-phosphate. Ala125 provides a ligand contact to NADPH. The sn-glycerol 3-phosphate site is built by Lys176, Asp229, Ser239, Arg240, and Asn241. Lys176 functions as the Proton acceptor in the catalytic mechanism. Residue Arg240 participates in NADPH binding. Residue Glu261 participates in NADPH binding.

The protein belongs to the NAD-dependent glycerol-3-phosphate dehydrogenase family.

The protein localises to the cytoplasm. It carries out the reaction sn-glycerol 3-phosphate + NAD(+) = dihydroxyacetone phosphate + NADH + H(+). The enzyme catalyses sn-glycerol 3-phosphate + NADP(+) = dihydroxyacetone phosphate + NADPH + H(+). It functions in the pathway membrane lipid metabolism; glycerophospholipid metabolism. Catalyzes the reduction of the glycolytic intermediate dihydroxyacetone phosphate (DHAP) to sn-glycerol 3-phosphate (G3P), the key precursor for phospholipid synthesis. This is Glycerol-3-phosphate dehydrogenase [NAD(P)+] from Jannaschia sp. (strain CCS1).